Consider the following 239-residue polypeptide: Diablo IAP-binding mitochondrial protein (239 aa).

The N-terminal 21 residues, 1–21 (MAALKSWLSRSVTSFFRYRQC), are a transit peptide targeting the mitochondrion. The IAP-binding motif lies at 56 to 60 (AVPIA). The disordered stretch occupies residues 217–239 (RQKTQEEGEERAESEQEAYLRED).

Belongs to the Smac/DIABLO protein family. As to quaternary structure, homodimer. Interacts with BIRC2/c-IAP1 (via BIR3 domain). Interacts with BIRC6/BRUCE; inhibits BIRC6 activity. Interacts with BIRC7/livin. Interacts with XIAP/BIRC4 (via BIR3 domain). Interacts with the monomeric and dimeric form of BIRC5/survivin. Interacts with AREL1 (via HECT domain); in the cytoplasm following induction of apoptosis. Interacts with BEX3. Post-translationally, ubiquitinated by BIRC7/livin. Ubiquitinated by BIRC6. In terms of processing, the precursor form is proteolytically cleaved by mitochondrial processing peptidase MPP to remove the transit peptide and produce an intermediate form. This is then processed by PARL to produce the mature cleaved form which is released from mitochondria into the cytosol in apoptotic cells. Ubiquitously expressed with highest expression in testis. Expression is also high in heart, liver, kidney, spleen, prostate and ovary. Low in brain, lung, thymus and peripheral blood leukocytes. Isoform 3 is ubiquitously expressed.

It is found in the mitochondrion. The protein localises to the cytoplasm. It localises to the cytosol. Promotes apoptosis by activating caspases in the cytochrome c/Apaf-1/caspase-9 pathway. Acts by opposing the inhibitory activity of inhibitor of apoptosis proteins (IAP). Inhibits the activity of BIRC6/BRUCE by inhibiting its binding to caspases. Functionally, attenuates the stability and apoptosis-inhibiting activity of XIAP/BIRC4 by promoting XIAP/BIRC4 ubiquitination and degradation through the ubiquitin-proteasome pathway. Also disrupts XIAP/BIRC4 interacting with processed caspase-9 and promotes caspase-3 activation. Its function is as follows. Defective in the capacity to down-regulate the XIAP/BIRC4 abundance. This chain is Diablo IAP-binding mitochondrial protein, found in Homo sapiens (Human).